Here is a 258-residue protein sequence, read N- to C-terminus: MIFVLDVGNTNTVLGVYDGDELKHHWRIETSRGKTEDEYAMTIKALLNHVGLQFSDIDGIIISSVVPPIMFALERMCLKYFHIKPIIVGPGIKTGLNIKYDNPREVGADRIVNAVAGIHLYGSPLIIVDFGTATTYCYINEHKQYMGGAIAPGIMISTEALFARAAKLPRIEIARPDDIIGKNTVSAMQAGILYGYVGQVEGIVSRMKAKSSVPPKVIATGGLASLIASESSVIDIVDPFLTLTGLKILYEKNVDKKQ.

Residue 6–13 coordinates ATP; sequence DVGNTNTV. Residues Tyr-100 and 107–110 contribute to the substrate site; that span reads GADR. Asp-109 (proton acceptor) is an active-site residue. Residue Asp-129 coordinates K(+). Residue Thr-132 coordinates ATP. Thr-184 lines the substrate pocket.

It belongs to the type III pantothenate kinase family. In terms of assembly, homodimer. The cofactor is NH4(+). K(+) serves as cofactor.

The protein localises to the cytoplasm. It catalyses the reaction (R)-pantothenate + ATP = (R)-4'-phosphopantothenate + ADP + H(+). It functions in the pathway cofactor biosynthesis; coenzyme A biosynthesis; CoA from (R)-pantothenate: step 1/5. Catalyzes the phosphorylation of pantothenate (Pan), the first step in CoA biosynthesis. The polypeptide is Type III pantothenate kinase (Geobacillus sp. (strain WCH70)).